The chain runs to 145 residues: Secreted RxLR effector protein 100 (145 aa).

Positions 1–19 (MRYLLLTFFTFHCQMVADA) are cleaved as a signal peptide. A RxLR motif is present at residues 27–30 (RLLR). The disordered stretch occupies residues 38-77 (SGEGKIEEAGMIVTTGAPTPENETMEHNEVPQSTTDTDQK). Residue Asn-59 is glycosylated (N-linked (GlcNAc...) asparagine).

This sequence belongs to the RxLR effector family.

The protein resides in the secreted. The protein localises to the host nucleus. Secreted effector that dos not suppress the host cell death induced by cell death-inducing proteins. The sequence is that of Secreted RxLR effector protein 100 from Plasmopara viticola (Downy mildew of grapevine).